Here is a 548-residue protein sequence, read N- to C-terminus: Nonribosomal peptide synthetase 8 (548 aa).

Residues 1 to 77 (MNSLDQWRDT…QLRGENRSGP (77 aa)) enclose the Carrier domain. S35 carries the O-(pantetheine 4'-phosphoryl)serine modification. The segment at 122–537 (MAPISSIQEF…FKSLIAELAA (416 aa)) is condensation.

Belongs to the NRP synthetase family.

The protein operates within mycotoxin biosynthesis. In terms of biological role, nonribosomal peptide synthetase; part of the gene cluster that mediates the biosynthesis of fumonisins B1 (FB1), B2 (FB2), B3 (FB3), and B4 (FB4), which are carcinogenic mycotoxins. Within the pathway FUM14 catalyzes esterification of CoA-activated tricarballylic acid to the C-14 and C-15 hydroxyls of the fumonisin backbone. The biosynthesis starts with the FUM1-catalyzed carbon chain assembly from one molecule of acetyl-CoA, eight molecules of malonyl-CoA, and two molecules of methionine (in S-adenosyl form). The C18 polyketide chain is released from the enzyme by a nucleophilic attack of a carbanion, which is derived from R-carbon of alanine by decarboxylation, on the carbonyl carbon of polyketide acyl chain. This step is catalyzed by the pyridoxal 5'-phosphate-dependent aminoacyl transferase FUM8. The resultant 3-keto intermediate is then stereospecifically reduced to a 3-hydroxyl product by reductase FUM13. Subsequent oxidations at C-10 by the cytochrome P450 monooxygenase FUM2, C-14 and C-15 by FUM6, FUM12 or FUM15, tricarballylic esterification of the hydroxyl groups on C-14 and C-15 by acyltransferase FUM14, and C-5 hydroxylation by 2-keto-glutarate-dependent dioxygenase FUM3 furnish the biosynthesis of fumonisins. The tricarballylic moieties are most likely derived from the citric acid cycle, and their addition to the carbon backbone may involve FUM7, FUM10, FUM11 and FUM14. In Gibberella moniliformis (strain M3125 / FGSC 7600) (Maize ear and stalk rot fungus), this protein is Nonribosomal peptide synthetase 8.